Consider the following 755-residue polypeptide: Putative two-component response regulator-like APRR6 (755 aa).

The Response regulatory domain maps to 14–128 (SILLIDHDTA…DIKNMWQHVF (115 aa)).

It belongs to the ARR-like family.

The protein resides in the nucleus. This is Putative two-component response regulator-like APRR6 (APRR6) from Arabidopsis thaliana (Mouse-ear cress).